Here is an 863-residue protein sequence, read N- to C-terminus: DNA mismatch repair protein MutS (863 aa).

Residue 607–614 coordinates ATP; that stretch reads GPNMAGKS.

It belongs to the DNA mismatch repair MutS family.

Its function is as follows. This protein is involved in the repair of mismatches in DNA. It is possible that it carries out the mismatch recognition step. This protein has a weak ATPase activity. The protein is DNA mismatch repair protein MutS of Caldicellulosiruptor saccharolyticus (strain ATCC 43494 / DSM 8903 / Tp8T 6331).